The primary structure comprises 2280 residues: Acetyl-CoA carboxylase (2280 aa).

The Biotin carboxylation domain maps to 68–577 (VITSILIANN…TTGWLDRLIA (510 aa)). The ATP-grasp domain maps to 226–418 (ETNIVTVDDD…LPAAQLQVAM (193 aa)). 266 to 271 (GGGGKG) contributes to the ATP binding site. E375, E389, and N391 together coordinate Mn(2+). The active site involves R393. The 75-residue stretch at 704–778 (LEQENDPTQL…DAGDILGILT (75 aa)) folds into the Biotinyl-binding domain. Position 745 is an N6-biotinyllysine (K745). S1179 and S1181 each carry phosphoserine. The 340-residue stretch at 1524–1863 (PYPTKEWLQP…KRNNPVPISP (340 aa)) folds into the CoA carboxyltransferase N-terminal domain. A carboxyltransferase region spans residues 1524 to 2181 (PYPTKEWLQP…EHYALQKITQ (658 aa)). CoA is bound by residues R1772, K2074, and R2076. In terms of domain architecture, CoA carboxyltransferase C-terminal spans 1867 to 2181 (TWDRDVEFYP…EHYALQKITQ (315 aa)).

In terms of assembly, interacts with sad1. The cofactor is biotin. It depends on Mn(2+) as a cofactor.

Its subcellular location is the cytoplasm. The catalysed reaction is hydrogencarbonate + acetyl-CoA + ATP = malonyl-CoA + ADP + phosphate + H(+). It carries out the reaction N(6)-biotinyl-L-lysyl-[protein] + hydrogencarbonate + ATP = N(6)-carboxybiotinyl-L-lysyl-[protein] + ADP + phosphate + H(+). It functions in the pathway lipid metabolism; malonyl-CoA biosynthesis; malonyl-CoA from acetyl-CoA: step 1/1. With respect to regulation, by phosphorylation. Functionally, carries out three functions: biotin carboxyl carrier protein, biotin carboxylase and carboxyltransferase. This chain is Acetyl-CoA carboxylase (cut6), found in Schizosaccharomyces pombe (strain 972 / ATCC 24843) (Fission yeast).